A 298-amino-acid chain; its full sequence is Probable porphobilinogen deaminase (298 aa).

The residue at position 241 (C241) is an S-(dipyrrolylmethanemethyl)cysteine.

The protein belongs to the HMBS family. Dipyrromethane is required as a cofactor.

The catalysed reaction is 4 porphobilinogen + H2O = hydroxymethylbilane + 4 NH4(+). It functions in the pathway porphyrin-containing compound metabolism; protoporphyrin-IX biosynthesis; coproporphyrinogen-III from 5-aminolevulinate: step 2/4. Its function is as follows. Tetrapolymerization of the monopyrrole PBG into the hydroxymethylbilane pre-uroporphyrinogen in several discrete steps. The polypeptide is Probable porphobilinogen deaminase (Methanopyrus kandleri (strain AV19 / DSM 6324 / JCM 9639 / NBRC 100938)).